A 77-amino-acid polypeptide reads, in one-letter code: DinI-like protein in retron Ec67 (77 aa).

This sequence belongs to the DinI family.

The polypeptide is DinI-like protein in retron Ec67 (Escherichia coli).